The sequence spans 565 residues: Sulfite reductase [NADPH] hemoprotein beta-component (565 aa).

[4Fe-4S] cluster contacts are provided by Cys429, Cys435, Cys474, and Cys478. A siroheme-binding site is contributed by Cys478.

It belongs to the nitrite and sulfite reductase 4Fe-4S domain family. As to quaternary structure, alpha(8)-beta(8). The alpha component is a flavoprotein, the beta component is a hemoprotein. Requires siroheme as cofactor. The cofactor is [4Fe-4S] cluster.

The catalysed reaction is hydrogen sulfide + 3 NADP(+) + 3 H2O = sulfite + 3 NADPH + 4 H(+). The protein operates within sulfur metabolism; hydrogen sulfide biosynthesis; hydrogen sulfide from sulfite (NADPH route): step 1/1. Component of the sulfite reductase complex that catalyzes the 6-electron reduction of sulfite to sulfide. This is one of several activities required for the biosynthesis of L-cysteine from sulfate. The chain is Sulfite reductase [NADPH] hemoprotein beta-component from Shewanella putrefaciens (strain CN-32 / ATCC BAA-453).